A 377-amino-acid polypeptide reads, in one-letter code: 3-dehydroquinate synthase (377 aa).

Residues 115-119 (GVIGD), 139-140 (TS), Lys152, and Lys161 each bind NAD(+). The Zn(2+) site is built by Glu194, His256, and His275.

Belongs to the sugar phosphate cyclases superfamily. Dehydroquinate synthase family. NAD(+) serves as cofactor. It depends on Co(2+) as a cofactor. Zn(2+) is required as a cofactor.

Its subcellular location is the cytoplasm. It carries out the reaction 7-phospho-2-dehydro-3-deoxy-D-arabino-heptonate = 3-dehydroquinate + phosphate. Its pathway is metabolic intermediate biosynthesis; chorismate biosynthesis; chorismate from D-erythrose 4-phosphate and phosphoenolpyruvate: step 2/7. In terms of biological role, catalyzes the conversion of 3-deoxy-D-arabino-heptulosonate 7-phosphate (DAHP) to dehydroquinate (DHQ). This Rhizobium meliloti (strain 1021) (Ensifer meliloti) protein is 3-dehydroquinate synthase.